We begin with the raw amino-acid sequence, 131 residues long: Profilin-2 (131 aa).

Belongs to the profilin family. In terms of assembly, occurs in many kinds of cells as a complex with monomeric actin in a 1:1 ratio.

The protein resides in the cytoplasm. The protein localises to the cytoskeleton. Binds to actin and affects the structure of the cytoskeleton. At high concentrations, profilin prevents the polymerization of actin, whereas it enhances it at low concentrations. By binding to PIP2, it inhibits the formation of IP3 and DG. This chain is Profilin-2 (PRO2), found in Parietaria judaica (Pellitory-of-the-wall).